The chain runs to 156 residues: MNLNATLFAQMVVFLILAWFTMKFVWPPLINALDERSKKIADGLSAAEKGKAELEAAHKRVDQELAQARNDGQQRIADAEKRAVAVADEIKAQAQAEAARIIAQAKADAEQQVVKARETLRGEVAALAVKGAEQILKREVDQAAHADLLNQLKAEL.

A helical transmembrane segment spans residues 7–27; that stretch reads LFAQMVVFLILAWFTMKFVWP.

The protein belongs to the ATPase B chain family. As to quaternary structure, F-type ATPases have 2 components, F(1) - the catalytic core - and F(0) - the membrane proton channel. F(1) has five subunits: alpha(3), beta(3), gamma(1), delta(1), epsilon(1). F(0) has three main subunits: a(1), b(2) and c(10-14). The alpha and beta chains form an alternating ring which encloses part of the gamma chain. F(1) is attached to F(0) by a central stalk formed by the gamma and epsilon chains, while a peripheral stalk is formed by the delta and b chains.

The protein localises to the cell inner membrane. In terms of biological role, f(1)F(0) ATP synthase produces ATP from ADP in the presence of a proton or sodium gradient. F-type ATPases consist of two structural domains, F(1) containing the extramembraneous catalytic core and F(0) containing the membrane proton channel, linked together by a central stalk and a peripheral stalk. During catalysis, ATP synthesis in the catalytic domain of F(1) is coupled via a rotary mechanism of the central stalk subunits to proton translocation. Component of the F(0) channel, it forms part of the peripheral stalk, linking F(1) to F(0). This is ATP synthase subunit b from Paraburkholderia phytofirmans (strain DSM 17436 / LMG 22146 / PsJN) (Burkholderia phytofirmans).